Consider the following 62-residue polypeptide: Trypsin inhibitor MCI-3 (62 aa).

The protein belongs to the protease inhibitor I13 (potato type I serine protease inhibitor) family.

The polypeptide is Trypsin inhibitor MCI-3 (Momordica charantia (Bitter gourd)).